Reading from the N-terminus, the 452-residue chain is Acetyl-CoA decarbonylase/synthase complex subunit delta (452 aa).

It belongs to the CdhD family. As to quaternary structure, heterodimer of delta and gamma chains. The ACDS complex is made up of alpha, epsilon, beta, gamma and delta chains with a probable stoichiometry of (alpha(2)epsilon(2))(4)-beta(8)-(gamma(1)delta(1))(8).

Functionally, part of a complex that catalyzes the reversible cleavage of acetyl-CoA, allowing autotrophic growth from CO(2). Probably maintains the overall quaternary structure of the ACDS complex. This chain is Acetyl-CoA decarbonylase/synthase complex subunit delta, found in Archaeoglobus fulgidus (strain ATCC 49558 / DSM 4304 / JCM 9628 / NBRC 100126 / VC-16).